Here is a 1315-residue protein sequence, read N- to C-terminus: DNA-directed RNA polymerase subunit beta' (1315 aa).

Cys-60, Cys-62, Cys-75, and Cys-78 together coordinate Zn(2+). The Mg(2+) site is built by Asp-535, Asp-537, and Asp-539. The Zn(2+) site is built by Cys-890, Cys-967, Cys-974, and Cys-977.

It belongs to the RNA polymerase beta' chain family. The RNAP catalytic core consists of 2 alpha, 1 beta, 1 beta' and 1 omega subunit. When a sigma factor is associated with the core the holoenzyme is formed, which can initiate transcription. Mg(2+) is required as a cofactor. Requires Zn(2+) as cofactor.

It catalyses the reaction RNA(n) + a ribonucleoside 5'-triphosphate = RNA(n+1) + diphosphate. Functionally, DNA-dependent RNA polymerase catalyzes the transcription of DNA into RNA using the four ribonucleoside triphosphates as substrates. The protein is DNA-directed RNA polymerase subunit beta' of Mycobacterium sp. (strain MCS).